A 252-amino-acid polypeptide reads, in one-letter code: Enolase-phosphatase E1 (252 aa).

Asp14 and Glu16 together coordinate Mg(2+). Residues 143 to 144 (SS) and Lys177 contribute to the substrate site. Asp202 is a binding site for Mg(2+).

Belongs to the HAD-like hydrolase superfamily. MasA/MtnC family. In terms of assembly, monomer. Mg(2+) serves as cofactor.

The protein resides in the cytoplasm. Its subcellular location is the nucleus. It carries out the reaction 5-methylsulfanyl-2,3-dioxopentyl phosphate + H2O = 1,2-dihydroxy-5-(methylsulfanyl)pent-1-en-3-one + phosphate. It functions in the pathway amino-acid biosynthesis; L-methionine biosynthesis via salvage pathway; L-methionine from S-methyl-5-thio-alpha-D-ribose 1-phosphate: step 3/6. Its pathway is amino-acid biosynthesis; L-methionine biosynthesis via salvage pathway; L-methionine from S-methyl-5-thio-alpha-D-ribose 1-phosphate: step 4/6. Its function is as follows. Bifunctional enzyme that catalyzes the enolization of 2,3-diketo-5-methylthiopentyl-1-phosphate (DK-MTP-1-P) into the intermediate 2-hydroxy-3-keto-5-methylthiopentenyl-1-phosphate (HK-MTPenyl-1-P), which is then dephosphorylated to form the acireductone 1,2-dihydroxy-3-keto-5-methylthiopentene (DHK-MTPene). The chain is Enolase-phosphatase E1 from Drosophila pseudoobscura pseudoobscura (Fruit fly).